The primary structure comprises 417 residues: NADH-quinone oxidoreductase subunit D 2 (417 aa).

This sequence belongs to the complex I 49 kDa subunit family. In terms of assembly, NDH-1 is composed of 14 different subunits. Subunits NuoB, C, D, E, F, and G constitute the peripheral sector of the complex.

It localises to the cell membrane. The enzyme catalyses a quinone + NADH + 5 H(+)(in) = a quinol + NAD(+) + 4 H(+)(out). Its function is as follows. NDH-1 shuttles electrons from NADH, via FMN and iron-sulfur (Fe-S) centers, to quinones in the respiratory chain. The immediate electron acceptor for the enzyme in this species is believed to be ubiquinone. Couples the redox reaction to proton translocation (for every two electrons transferred, four hydrogen ions are translocated across the cytoplasmic membrane), and thus conserves the redox energy in a proton gradient. The sequence is that of NADH-quinone oxidoreductase subunit D 2 from Roseiflexus sp. (strain RS-1).